A 36-amino-acid chain; its full sequence is Conotoxin Bt11.4 (36 aa).

4 disulfides stabilise this stretch: Cys2/Cys16, Cys9/Cys21, Cys15/Cys26, and Cys20/Cys33.

This sequence belongs to the conotoxin I1 superfamily. As to expression, expressed by the venom duct.

The protein resides in the secreted. The sequence is that of Conotoxin Bt11.4 from Conus betulinus (Beech cone).